A 193-amino-acid chain; its full sequence is Ion-translocating oxidoreductase complex subunit A (193 aa).

The next 6 membrane-spanning stretches (helical) occupy residues 5–25 (FLLFVGTVLVNNFVLVKFLGL), 39–59 (IGMGFATTFVMTLASVCSWLV), 62–82 (FILLPLDLIYLRTLSFILVIA), 102–122 (LLGIFLPLITTNCAVLGVALL), 134–154 (AIYGFGAAAGFSLVMVLFAAI), and 171–191 (SIGLITAGLMSLAFMGFSGLV).

The protein belongs to the NqrDE/RnfAE family. The complex is composed of six subunits: RnfA, RnfB, RnfC, RnfD, RnfE and RnfG.

Its subcellular location is the cell inner membrane. Functionally, part of a membrane-bound complex that couples electron transfer with translocation of ions across the membrane. In Photorhabdus laumondii subsp. laumondii (strain DSM 15139 / CIP 105565 / TT01) (Photorhabdus luminescens subsp. laumondii), this protein is Ion-translocating oxidoreductase complex subunit A.